Consider the following 185-residue polypeptide: Ribosome-recycling factor (185 aa).

The protein belongs to the RRF family.

It is found in the cytoplasm. Functionally, responsible for the release of ribosomes from messenger RNA at the termination of protein biosynthesis. May increase the efficiency of translation by recycling ribosomes from one round of translation to another. The sequence is that of Ribosome-recycling factor from Streptococcus thermophilus (strain ATCC BAA-491 / LMD-9).